The following is a 315-amino-acid chain: Melanocyte-stimulating hormone receptor (315 aa).

The Extracellular portion of the chain corresponds to 1 to 35 (MSTQEPQKSLLGSLNSNATSHLGLATNQSEPWCLY). 2 N-linked (GlcNAc...) asparagine glycosylation sites follow: N17 and N27. A helical transmembrane segment spans residues 36-61 (VSIPDGLFLSLGLVSLVENVLVVIAI). Over 62–70 (TKNRNLHSP) the chain is Cytoplasmic. Residues 71–91 (MYYFICCLALSDLMVSVSIVL) form a helical membrane-spanning segment. Topologically, residues 92 to 116 (ETTIILLLEAGILVARVALVQQLDN) are extracellular. Residues 117–138 (LIDVLICGSMVSSLCFLGIIAI) form a helical membrane-spanning segment. Residues 139-161 (DRYISIFYALRYHSIVTLPRARR) are Cytoplasmic-facing. A helical transmembrane segment spans residues 162 to 181 (AVVGIWMVSIVSSTLFITYY). At 182–189 (KHTAVLLC) the chain is on the extracellular side. The chain crosses the membrane as a helical span at residues 190–209 (LVTFFLAMLALMAILYAHMF). The Cytoplasmic portion of the chain corresponds to 210 to 238 (TRACQHAQGIAQLHKRRRSIRQGFCLKGA). Residues 239-264 (ATLTILLGIFFLCWGPFFLHLLLIVL) traverse the membrane as a helical segment. Over 265–277 (CPQHPTCSCIFKN) the chain is Extracellular. Residues 278 to 298 (FNLFLLLIVLSSTVDPLIYAF) form a helical membrane-spanning segment. The Cytoplasmic portion of the chain corresponds to 299 to 315 (RSQELRMTLKEVLLCSW). The S-palmitoyl cysteine moiety is linked to residue C313.

The protein belongs to the G-protein coupled receptor 1 family. Interacts with MGRN1, but does not undergo MGRN1-mediated ubiquitination; this interaction competes with GNAS-binding and thus inhibits agonist-induced cAMP production. Interacts with OPN3; the interaction results in a decrease in MC1R-mediated cAMP signaling and ultimately a decrease in melanin production in melanocytes.

The protein resides in the cell membrane. In terms of biological role, receptor for MSH (alpha, beta and gamma) and ACTH. The activity of this receptor is mediated by G proteins which activate adenylate cyclase. Mediates melanogenesis, the production of eumelanin (black/brown) and phaeomelanin (red/yellow), via regulation of cAMP signaling in melanocytes. In Mus musculus (Mouse), this protein is Melanocyte-stimulating hormone receptor (Mc1r).